The sequence spans 141 residues: Large ribosomal subunit protein uL11 (141 aa).

It belongs to the universal ribosomal protein uL11 family. In terms of assembly, part of the ribosomal stalk of the 50S ribosomal subunit. Interacts with L10 and the large rRNA to form the base of the stalk. L10 forms an elongated spine to which L12 dimers bind in a sequential fashion forming a multimeric L10(L12)X complex. One or more lysine residues are methylated.

In terms of biological role, forms part of the ribosomal stalk which helps the ribosome interact with GTP-bound translation factors. In Brevibacillus brevis (strain 47 / JCM 6285 / NBRC 100599), this protein is Large ribosomal subunit protein uL11.